Reading from the N-terminus, the 331-residue chain is Glucokinase (331 aa).

13-18 serves as a coordination point for ATP; sequence GDIGGT.

Belongs to the bacterial glucokinase family.

It localises to the cytoplasm. It catalyses the reaction D-glucose + ATP = D-glucose 6-phosphate + ADP + H(+). In Caulobacter vibrioides (strain ATCC 19089 / CIP 103742 / CB 15) (Caulobacter crescentus), this protein is Glucokinase.